The sequence spans 1299 residues: Outer capsid protein VP1 (1299 aa).

Belongs to the aquareoviridae outer capsid VP1 protein family.

It localises to the virion. It carries out the reaction a 5'-end diphospho-ribonucleoside in mRNA + GTP + H(+) = a 5'-end (5'-triphosphoguanosine)-ribonucleoside in mRNA + diphosphate. The catalysed reaction is a 5'-end (5'-triphosphoguanosine)-ribonucleoside in mRNA + S-adenosyl-L-methionine = a 5'-end (N(7)-methyl 5'-triphosphoguanosine)-ribonucleoside in mRNA + S-adenosyl-L-homocysteine. Its function is as follows. Outer capsid protein involved in mRNA capping. Catalyzes the last 3 enzymatic activities for formation of the 5' cap structure on the viral plus-strand transcripts, namely the RNA guanylyltransferase, RNA-7N- and RNA-2'O-methyltransferase activities. The chain is Outer capsid protein VP1 (S1) from Aquareovirus C (isolate Golden shiner/USA/GSRV/1977) (AQRV-C).